The following is a 443-amino-acid chain: tRNA modification GTPase MnmE (443 aa).

The (6S)-5-formyl-5,6,7,8-tetrahydrofolate site is built by arginine 23, glutamate 80, and lysine 120. Residues 217–367 (GFEVVILGAP…LLAEIGRRAA (151 aa)) enclose the TrmE-type G domain. GTP-binding positions include 227–232 (NAGKSS), 246–252 (TDEPGTT), and 271–274 (DTAG). Mg(2+)-binding residues include serine 231 and threonine 252. Lysine 443 serves as a coordination point for (6S)-5-formyl-5,6,7,8-tetrahydrofolate.

Belongs to the TRAFAC class TrmE-Era-EngA-EngB-Septin-like GTPase superfamily. TrmE GTPase family. As to quaternary structure, homodimer. Heterotetramer of two MnmE and two MnmG subunits. The cofactor is K(+).

Its subcellular location is the cytoplasm. Functionally, exhibits a very high intrinsic GTPase hydrolysis rate. Involved in the addition of a carboxymethylaminomethyl (cmnm) group at the wobble position (U34) of certain tRNAs, forming tRNA-cmnm(5)s(2)U34. The sequence is that of tRNA modification GTPase MnmE from Mesorhizobium japonicum (strain LMG 29417 / CECT 9101 / MAFF 303099) (Mesorhizobium loti (strain MAFF 303099)).